The sequence spans 432 residues: Adenosylhomocysteinase (432 aa).

Ser2 is subject to N-acetylserine. The substrate site is built by Thr57, Asp131, and Glu156. Ser183 is subject to Phosphoserine. The interval Ser183–Ala350 is NAD binding. Substrate is bound by residues Lys186 and Asp190. N6-(2-hydroxyisobutyryl)lysine is present on Lys186. Residue Tyr193 is modified to Phosphotyrosine.

This sequence belongs to the adenosylhomocysteinase family. Homotetramer. Interaction with AHCYL1. The cofactor is NAD(+).

Its subcellular location is the cytoplasm. It is found in the melanosome. The protein localises to the nucleus. The protein resides in the endoplasmic reticulum. It catalyses the reaction S-adenosyl-L-homocysteine + H2O = L-homocysteine + adenosine. It functions in the pathway amino-acid biosynthesis; L-homocysteine biosynthesis; L-homocysteine from S-adenosyl-L-homocysteine: step 1/1. In terms of biological role, catalyzes the hydrolysis of S-adenosyl-L-homocysteine to form adenosine and homocysteine. Binds copper ions. The sequence is that of Adenosylhomocysteinase (AHCY) from Macaca fascicularis (Crab-eating macaque).